The chain runs to 96 residues: Evasin P1100 (96 aa).

Residues 1–28 form the signal peptide; sequence MAFNVITFLQFSVFVVILFNINLHSASA. Intrachain disulfides connect C48/C67, C52/C69, and C63/C80. The N-linked (GlcNAc...) asparagine glycan is linked to N51. N74 is a glycosylation site (N-linked (GlcNAc...) asparagine).

It is found in the secreted. Salivary chemokine-binding protein which binds to host chemokines CXCL1, CXCL2, CXCL3, CXCL5, CXCL6, CXCL10, CXCL11 and CXCL13. The chain is Evasin P1100 from Ixodes ricinus (Common tick).